Consider the following 910-residue polypeptide: Seizure 6-like protein 2 (910 aa).

Residues 1–27 (MGTPKAQHPPPSQLLLLILLSCAWIEG) form the signal peptide. Topologically, residues 28-844 (LPLKEDEMMP…DPSRQLEGGN (817 aa)) are extracellular. The interval 70 to 152 (PGSDPDPTLA…PLRPEGGEEE (83 aa)) is disordered. Positions 123–145 (LTPPPGTTAPPPPGPASPVPPLR) are enriched in pro residues. Cysteine 173 and cysteine 202 form a disulfide bridge. One can recognise a CUB 1 domain in the interval 173 to 286 (CNNNISEGEG…NGFRIHYQAY (114 aa)). N-linked (GlcNAc...) asparagine glycosylation is present at asparagine 222. Residues 288–347 (LSCGFPPRPAHGDVSVTDLHPGGTATFHCDSGYQLQGEETLICLNGTRPAWTGEPPSCTA) enclose the Sushi 1 domain. Cystine bridges form between cysteine 290-cysteine 330, cysteine 316-cysteine 345, cysteine 349-cysteine 376, cysteine 464-cysteine 508, cysteine 491-cysteine 523, cysteine 527-cysteine 553, cysteine 644-cysteine 686, cysteine 672-cysteine 699, cysteine 705-cysteine 747, cysteine 733-cysteine 764, cysteine 771-cysteine 813, and cysteine 799-cysteine 828. N-linked (GlcNAc...) asparagine glycans are attached at residues asparagine 332, asparagine 373, asparagine 473, and asparagine 517. One can recognise a CUB 2 domain in the interval 349–459 (CGGTIHNATL…LLLSLRFEAF (111 aa)). Residues 462–525 (DRCFPPFLAH…WNDTEPACKA (64 aa)) enclose the Sushi 2 domain. The 112-residue stretch at 527–638 (CGGELSEPAG…QGFVLHFKEV (112 aa)) folds into the CUB 3 domain. Sushi domains lie at 642–701 (DTCP…ACQK), 703–766 (MTCA…KCAL), and 769–830 (EPCL…LCKV). A helical membrane pass occupies residues 845 to 865 (LALAILLPLGLVIVLGIGVYI). Residues 866–910 (YYTKLQGKSLFGFSGSHSYSPITVESDFSNPLYEAGDTREYEVSI) lie on the Cytoplasmic side of the membrane.

The protein belongs to the SEZ6 family. As to expression, expressed exclusively in the brain, predominantly in the neurons. Wide expression in the gray matter of the brain with high levels in the olfactory bulb, anterior olfactory nuclei, hippocampal formation and cerebellar cortex. Detected diffusely and weakly in the white matter, such as the corpus callosum and cerebellar medulla. In the cerebellar cortex, intensely expressed in Purkinje cells (PC) and granule cells. Detected also in interneurons in the molecular layer. Up-regulated at two weeks after birth.

Its subcellular location is the cell membrane. It is found in the endoplasmic reticulum membrane. May contribute to specialized endoplasmic reticulum functions in neurons. The polypeptide is Seizure 6-like protein 2 (Sez6l2) (Mus musculus (Mouse)).